Here is a 128-residue protein sequence, read N- to C-terminus: NADH-quinone oxidoreductase subunit A (128 aa).

A run of 3 helical transmembrane segments spans residues 9 to 29 (FPIA…LALA), 68 to 88 (LLFI…VLLL), and 96 to 116 (LGWA…AGLV).

This sequence belongs to the complex I subunit 3 family. NDH-1 is composed of 14 different subunits. Subunits NuoA, H, J, K, L, M, N constitute the membrane sector of the complex.

Its subcellular location is the cell inner membrane. The catalysed reaction is a quinone + NADH + 5 H(+)(in) = a quinol + NAD(+) + 4 H(+)(out). In terms of biological role, NDH-1 shuttles electrons from NADH, via FMN and iron-sulfur (Fe-S) centers, to quinones in the respiratory chain. The immediate electron acceptor for the enzyme in this species is believed to be ubiquinone. Couples the redox reaction to proton translocation (for every two electrons transferred, four hydrogen ions are translocated across the cytoplasmic membrane), and thus conserves the redox energy in a proton gradient. The sequence is that of NADH-quinone oxidoreductase subunit A from Anaeromyxobacter sp. (strain Fw109-5).